The sequence spans 313 residues: ADP-L-glycero-D-manno-heptose-6-epimerase (313 aa).

NADP(+) contacts are provided by residues M10–I11, D31–N32, K38, R53, E75–S79, and N92. Residue Y139 is the Proton acceptor of the active site. K143 provides a ligand contact to NADP(+). Substrate is bound at residue N174. Residues V175 and K183 each contribute to the NADP(+) site. The active-site Proton acceptor is the K183. Residues S185, H192, F206–S209, R214, and Y277 contribute to the substrate site.

The protein belongs to the NAD(P)-dependent epimerase/dehydratase family. HldD subfamily. In terms of assembly, homopentamer. NADP(+) is required as a cofactor.

The catalysed reaction is ADP-D-glycero-beta-D-manno-heptose = ADP-L-glycero-beta-D-manno-heptose. The protein operates within nucleotide-sugar biosynthesis; ADP-L-glycero-beta-D-manno-heptose biosynthesis; ADP-L-glycero-beta-D-manno-heptose from D-glycero-beta-D-manno-heptose 7-phosphate: step 4/4. It participates in bacterial outer membrane biogenesis; LPS core biosynthesis. Functionally, catalyzes the interconversion between ADP-D-glycero-beta-D-manno-heptose and ADP-L-glycero-beta-D-manno-heptose via an epimerization at carbon 6 of the heptose. The protein is ADP-L-glycero-D-manno-heptose-6-epimerase of Vibrio parahaemolyticus serotype O3:K6 (strain RIMD 2210633).